The primary structure comprises 790 residues: Vacuolar protein sorting-associated protein 35B (790 aa).

Belongs to the VPS35 family. As to quaternary structure, component of the retromer complex which consists of VPS29 (MAG1), VPS26 (VPS26A or VPS26B), VPS35 (VPS35A or VPS35B or VPS35C), VPS5/17 (SNX1 or SNX2A or SNX2B). Component of a retromer subcomplex consisting of VPS29 (MAG1), VPS26 (VPS26A or VPS26B), VPS35 (VPS35A or VPS35B or VPS35C). In terms of tissue distribution, expressed in siliques and maturing seeds (at protein level).

It is found in the cytoplasm. The protein localises to the endosome membrane. The protein resides in the prevacuolar compartment membrane. Its subcellular location is the golgi apparatus. It localises to the trans-Golgi network membrane. Its function is as follows. Plays a role in vesicular protein sorting. Component of the membrane-associated retromer complex which is essential in endosome-to-Golgi retrograde transport. Also involved in the efficient sorting of seed storage proteins globulin 12S and albumin 2S. The VPS29-VPS26-VPS35 subcomplex may be involved in recycling of specific cargos from endosome to the plasma membrane. The chain is Vacuolar protein sorting-associated protein 35B (VPS35B) from Arabidopsis thaliana (Mouse-ear cress).